The chain runs to 206 residues: NADH-quinone oxidoreductase subunit C (206 aa).

This sequence belongs to the complex I 30 kDa subunit family. NDH-1 is composed of 14 different subunits. Subunits NuoB, C, D, E, F, and G constitute the peripheral sector of the complex.

It is found in the cell inner membrane. The catalysed reaction is a quinone + NADH + 5 H(+)(in) = a quinol + NAD(+) + 4 H(+)(out). NDH-1 shuttles electrons from NADH, via FMN and iron-sulfur (Fe-S) centers, to quinones in the respiratory chain. The immediate electron acceptor for the enzyme in this species is believed to be ubiquinone. Couples the redox reaction to proton translocation (for every two electrons transferred, four hydrogen ions are translocated across the cytoplasmic membrane), and thus conserves the redox energy in a proton gradient. In Nitrosomonas europaea (strain ATCC 19718 / CIP 103999 / KCTC 2705 / NBRC 14298), this protein is NADH-quinone oxidoreductase subunit C.